The chain runs to 297 residues: Acetylglutamate kinase (297 aa).

Residues 68 to 69 (GG), R90, and N189 contribute to the substrate site.

Belongs to the acetylglutamate kinase family. ArgB subfamily.

The protein resides in the cytoplasm. It catalyses the reaction N-acetyl-L-glutamate + ATP = N-acetyl-L-glutamyl 5-phosphate + ADP. It functions in the pathway amino-acid biosynthesis; L-arginine biosynthesis; N(2)-acetyl-L-ornithine from L-glutamate: step 2/4. Functionally, catalyzes the ATP-dependent phosphorylation of N-acetyl-L-glutamate. The chain is Acetylglutamate kinase from Akkermansia muciniphila (strain ATCC BAA-835 / DSM 22959 / JCM 33894 / BCRC 81048 / CCUG 64013 / CIP 107961 / Muc).